We begin with the raw amino-acid sequence, 243 residues long: 1-(5-phosphoribosyl)-5-[(5-phosphoribosylamino)methylideneamino] imidazole-4-carboxamide isomerase (243 aa).

The Proton acceptor role is filled by D8. Catalysis depends on D130, which acts as the Proton donor.

It belongs to the HisA/HisF family.

Its subcellular location is the cytoplasm. It catalyses the reaction 1-(5-phospho-beta-D-ribosyl)-5-[(5-phospho-beta-D-ribosylamino)methylideneamino]imidazole-4-carboxamide = 5-[(5-phospho-1-deoxy-D-ribulos-1-ylimino)methylamino]-1-(5-phospho-beta-D-ribosyl)imidazole-4-carboxamide. It functions in the pathway amino-acid biosynthesis; L-histidine biosynthesis; L-histidine from 5-phospho-alpha-D-ribose 1-diphosphate: step 4/9. This chain is 1-(5-phosphoribosyl)-5-[(5-phosphoribosylamino)methylideneamino] imidazole-4-carboxamide isomerase, found in Ruthia magnifica subsp. Calyptogena magnifica.